The sequence spans 88 residues: UPF0335 protein NGR_c28390 (88 aa).

It belongs to the UPF0335 family.

This Sinorhizobium fredii (strain NBRC 101917 / NGR234) protein is UPF0335 protein NGR_c28390.